The sequence spans 88 residues: Small ribosomal subunit protein bS20 (88 aa).

The disordered stretch occupies residues 1 to 27 (MANSKSAKKRALQSEKRRQHNASRRSM).

It belongs to the bacterial ribosomal protein bS20 family.

Binds directly to 16S ribosomal RNA. The chain is Small ribosomal subunit protein bS20 from Shewanella baltica (strain OS223).